The sequence spans 283 residues: Pre-protein-C8 (283 aa).

Residues 1-40 (MKEDNNTSEESGRINRRNVLKTVGAAGLFAAGSTGMAAAA) constitute a signal peptide (tat-type signal). Residues 61 to 75 (ARELAKTPAFRELAQ) form a helix-loop-helix (HLH) region region.

As to quaternary structure, immunity protein HalI interacts with Halocin-C8; the interaction is direct. Post-translationally, predicted to be exported by the Tat system. The position of the signal peptide cleavage has not been experimentally proven.

It localises to the secreted. It is found in the cell membrane. In terms of biological role, has antibacterial activity against a wide variety of haloarchaeons. Causes cell lysis and death, possibly by disrupting the cell wall. Acts as an immunity protein for halocin-C8. Able to block the halocin-C8 activity by sequestering the activity of halocin-C8 through specific and direct binding. The chain is Pre-protein-C8 (proC8) from Halobacterium sp. (strain AS7092).